Reading from the N-terminus, the 115-residue chain is Large ribosomal subunit protein P2y (115 aa).

Residues 63–115 (ASVPSGGGGGVAVASATSGGGGGGGASAAESKKEEKKEEKEESDDDMGFSLFE) form a disordered region. Residues 92 to 102 (ESKKEEKKEEK) are compositionally biased toward basic and acidic residues. Position 105 is a phosphoserine (Ser-105).

The protein belongs to the eukaryotic ribosomal protein P1/P2 family. In terms of assembly, P1 and P2 exist as dimers at the large ribosomal subunit. Post-translationally, phosphorylated.

In terms of biological role, plays an important role in the elongation step of protein synthesis. The polypeptide is Large ribosomal subunit protein P2y (RPP2B) (Arabidopsis thaliana (Mouse-ear cress)).